The primary structure comprises 189 residues: Interferon alpha-6 (189 aa).

A signal peptide spans 1-23 (MARLCAFLMVLAVLSYWPTCSLG). 2 cysteine pairs are disulfide-bonded: Cys24/Cys122 and Cys52/Cys162. Asn101 carries an N-linked (GlcNAc...) asparagine glycan.

It belongs to the alpha/beta interferon family.

Its subcellular location is the secreted. Its function is as follows. Produced by macrophages, IFN-alpha have antiviral activities. Interferon stimulates the production of two enzymes: a protein kinase and an oligoadenylate synthetase. The protein is Interferon alpha-6 (Ifna6) of Mus musculus (Mouse).